A 505-amino-acid polypeptide reads, in one-letter code: MFS efflux pump atnC (505 aa).

Helical transmembrane passes span 48–68, 117–137, 148–168, 181–201, 216–236, 240–260, 304–324, 343–363, 377–399, 403–425, 439–459, and 469–489; these read VLQVILLCASATLTLDIGLTV, LIGWQTVFDGIPAIFLAIPYG, VLLLCFLGLALSTAWALLVCW, LFQCLGGGPAVATAVLEATIA, LQATVLISDILANPLSSVLMA, WTPCFLGVGIQALATVLLIAL, VAGLVFSLLILTVSAESLDFL, LSLRAVVEFGLLLVVGSLLLF, LLIARLSLGLIVAGLLILSLSPT, AILVYTLGAGFQPAIMSLLASLW, TVAIILAVGGVISGPLISLMY, and WVGLPYFVASGLCAGIAGVLL.

Belongs to the major facilitator superfamily.

It is found in the membrane. It participates in secondary metabolite biosynthesis. MFS efflux pump; part of the gene cluster that mediates the biosynthesis of aspercryptins, linear lipopeptides built from six amino acids including 2 highly unusual and nonproteogenic amino acids, 2-amino-octanoic acid (2aoa) and 2-amino-dodecanol (2adol). This is MFS efflux pump atnC from Emericella nidulans (strain FGSC A4 / ATCC 38163 / CBS 112.46 / NRRL 194 / M139) (Aspergillus nidulans).